Consider the following 163-residue polypeptide: Lysosomal enzyme trafficking factor (163 aa).

Helical transmembrane passes span Met40–Phe60 and Leu98–Leu118.

It belongs to the LYSET family. Interacts with GNPTAB; this interaction is important for proper localization of GNPTAB in Golgi stacks. Interacts with MBTPS1.

Its subcellular location is the golgi apparatus membrane. In terms of biological role, required for mannose-6-phosphate-dependent trafficking of lysosomal enzymes. LYSET bridges GlcNAc-1-phosphate transferase (GNPTAB), to the membrane-bound transcription factor site-1 protease (MBTPS1), thus allowing proteolytic activation of the GNPTAB. GNPTAB is involved in the regulation of M6P-dependent Golgi-to-lysosome trafficking of lysosomal enzymes. LYSET is thus an essential factor for maturation and delivery of lysosomal hydrolases. Its function is as follows. (Microbial infection) Essential for infection by muliple viruses, including SARS-CoV-2, that utilize activated cathepsins for entry after M6P-dependent lysosomal transport. This Homo sapiens (Human) protein is Lysosomal enzyme trafficking factor.